Here is a 609-residue protein sequence, read N- to C-terminus: Glutamine--fructose-6-phosphate aminotransferase [isomerizing] (609 aa).

The active-site Nucleophile; for GATase activity is Cys-2. Residues 2–219 (CGIVGYIGGR…DGECARLTRD (218 aa)) enclose the Glutamine amidotransferase type-2 domain. 2 SIS domains span residues 285-424 (SSDL…LRGT) and 458-599 (LARE…VDQP). Lys-604 acts as the For Fru-6P isomerization activity in catalysis.

In terms of assembly, homodimer.

The protein localises to the cytoplasm. The catalysed reaction is D-fructose 6-phosphate + L-glutamine = D-glucosamine 6-phosphate + L-glutamate. Catalyzes the first step in hexosamine metabolism, converting fructose-6P into glucosamine-6P using glutamine as a nitrogen source. This is Glutamine--fructose-6-phosphate aminotransferase [isomerizing] from Gloeobacter violaceus (strain ATCC 29082 / PCC 7421).